The chain runs to 588 residues: Transport ATP-binding protein AarD (588 aa).

Residues 24–316 (LRISMLLGVV…LGTYYHAKAQ (293 aa)) form the ABC transmembrane type-1 domain. Helical transmembrane passes span 29-49 (LLGV…AVIL), 62-82 (LLTP…LTVI), 149-169 (IIPI…ALIL), 170-190 (FATA…AADA), 250-270 (SGVL…YFGF), and 276-296 (LNFG…ALIL). The region spanning 350–583 (IEANKLEIYS…EGPFARLLAH (234 aa)) is the ABC transporter domain. 383 to 390 (GQSGAGKS) lines the ATP pocket.

This sequence belongs to the ABC transporter superfamily.

It localises to the cell inner membrane. Its function is as follows. Somehow involved in the cytochrome D branch of aerobic respiration. Seems to be a component of a transport system. The chain is Transport ATP-binding protein AarD (aarD) from Providencia stuartii.